A 139-amino-acid polypeptide reads, in one-letter code: I-Kappa-B like protein N1 (139 aa).

ANK repeat units lie at residues 16–48 (NGENLLHAMCRHGNSLALSIIAQSINKNYQYLL), 54–87 (EGRKCIHIAAVMHKGQVATELIIILLNFGADVNG), and 92–122 (TGDTVLHIAVYLKDYYLAEWLCRRSGININA).

This sequence belongs to the polydnaviridae I-Kappa-B-like protein family.

In terms of biological role, suppresses the host immune response through NF-kappa-B inactivation. Possesses ankyrin repeat domain required for NF-kappa-B binding but lack the regulatory regions required for dissociation from NF-kappa-B and degradation. Therefore, prevents host NF-kappa-B release and subsequent activation. In Microplitis demolitor bracovirus (isolate Webb) (MdBV), this protein is I-Kappa-B like protein N1 (N2).